A 477-amino-acid chain; its full sequence is Ribulose bisphosphate carboxylase large chain (477 aa).

The propeptide occupies 1–2 (MS). Proline 3 carries the post-translational modification N-acetylproline. Residue lysine 14 is modified to N6,N6,N6-trimethyllysine. Substrate contacts are provided by asparagine 123 and threonine 173. The active-site Proton acceptor is lysine 175. Lysine 177 serves as a coordination point for substrate. Residues lysine 201, aspartate 203, and glutamate 204 each contribute to the Mg(2+) site. The residue at position 201 (lysine 201) is an N6-carboxylysine. Histidine 294 functions as the Proton acceptor in the catalytic mechanism. Substrate is bound by residues arginine 295, histidine 327, and serine 379.

Belongs to the RuBisCO large chain family. Type I subfamily. As to quaternary structure, heterohexadecamer of 8 large chains and 8 small chains; disulfide-linked. The disulfide link is formed within the large subunit homodimers. Requires Mg(2+) as cofactor. In terms of processing, the disulfide bond which can form in the large chain dimeric partners within the hexadecamer appears to be associated with oxidative stress and protein turnover.

It is found in the plastid. It catalyses the reaction 2 (2R)-3-phosphoglycerate + 2 H(+) = D-ribulose 1,5-bisphosphate + CO2 + H2O. It carries out the reaction D-ribulose 1,5-bisphosphate + O2 = 2-phosphoglycolate + (2R)-3-phosphoglycerate + 2 H(+). Functionally, ruBisCO catalyzes two reactions: the carboxylation of D-ribulose 1,5-bisphosphate, the primary event in carbon dioxide fixation, as well as the oxidative fragmentation of the pentose substrate in the photorespiration process. Both reactions occur simultaneously and in competition at the same active site. This is Ribulose bisphosphate carboxylase large chain (rbcL) from Lathraea clandestina (Purple toothwort).